The following is a 542-amino-acid chain: Pre-mRNA-splicing factor 38B (542 aa).

A compositionally biased stretch (polar residues) spans 1–12; it reads MANNSPALTGNS. The tract at residues 1–24 is disordered; the sequence is MANNSPALTGNSQPQHQAAAAVVQ. N-acetylalanine is present on alanine 2. Residue serine 5 is modified to Phosphoserine. Low complexity predominate over residues 13–24; sequence QPQHQAAAAVVQ. Residue lysine 227 is modified to N6-acetyllysine. The disordered stretch occupies residues 232–542; the sequence is QIKTRPRKIK…KEHKNKDETV (311 aa). Residues 243 to 255 show a composition bias toward basic and acidic residues; sequence DGKEGVEEIDRHI. Residues 256 to 284 show a composition bias toward basic residues; sequence ERRRSRSPRRSLSPRRSPRRSRSRSHHRD. Residues serine 288, serine 290, serine 318, and serine 320 each carry the phosphoserine modification. Residues 291–327 are compositionally biased toward basic and acidic residues; the sequence is FDRELEREKERQRLEREAKEREKERRRSRSLDRGLDR. The stretch at 292-323 forms a coiled coil; that stretch reads DRELEREKERQRLEREAKEREKERRRSRSLDR. A compositionally biased stretch (basic residues) spans 328-344; the sequence is RRSRSRERHRSRSRSRD. The span at 345 to 418 shows a compositional bias: basic and acidic residues; the sequence is RKGDRRDRDR…DRRHRDDKKE (74 aa). The segment covering 419 to 448 has biased composition (basic residues); sequence SKKKHSRSRSRERKHRSRSRSRNAGKRSRS. The residue at position 446 (serine 446) is a Phosphoserine. The segment covering 449-466 has biased composition (basic and acidic residues); it reads RSKDKASKHKNESKEKSN. Residues serine 471, serine 473, and serine 479 each carry the phosphoserine modification. Composition is skewed to basic and acidic residues over residues 479–492 and 499–522; these read SVEK…PSRE and RSQD…DHQR. Serine 523, serine 525, and serine 530 each carry phosphoserine. Positions 530–542 are enriched in basic and acidic residues; the sequence is SQEKEHKNKDETV.

Belongs to the PRP38 family.

It is found in the nucleus. May be required for pre-mRNA splicing. This is Pre-mRNA-splicing factor 38B (Prpf38b) from Rattus norvegicus (Rat).